Consider the following 544-residue polypeptide: Matrilin-1 (544 aa).

Residues 1-26 form the signal peptide; that stretch reads MRALSGPRLMLCGLLLLLFQAPCALG. Residues 42 to 217 enclose the VWFA 1 domain; the sequence is DLVFVVDSSR…SVIEKLSKKF (176 aa). N-linked (GlcNAc...) asparagine glycosylation is present at Asn77. The EGF-like domain maps to 224–264; sequence VSDLCATGDHDCEQVCVSSPGSYTCACREGFTLNSDGKTCN. Cystine bridges form between Cys228-Cys239, Cys235-Cys248, and Cys250-Cys263. One can recognise a VWFA 2 domain in the interval 276-448; sequence DLVFLIDGSK…KTINQIGKKL (173 aa). Asn345 carries an N-linked (GlcNAc...) asparagine glycan.

In terms of assembly, homotrimer. Part of a complex composed of MATN1 (via VWFA1 domain), type 2 collagens and type 6 collagens. Forms a complex (via covalent bonds) with ACAN; the interaction increases in abundance with increasing age of the organism via an increase in occupancy of MATN1 binding sites. Interacts with COMP. In terms of processing, N-glycosylated; reduces binding affinity for type 2 collagens. Expressed in trachea from fetus into adulthood (at protein level).

Its subcellular location is the secreted. It localises to the extracellular space. It is found in the extracellular matrix. In terms of biological role, a major component of the extracellular matrix of non-articular cartilage. Binds to type 2 collagens and forms long concatenated protein networks as part of the extracellular matrix. Required for the network-like organization and bundling of collagen fibrils surrounding chondrocytes in the zones of maturation and hypertrophy. Required for mechanotransduction and adaption to mechanical loading in cartilage chondrocytes, resulting in an increase in expression of the extracellular matrix components ACAN and COL2A1. Acts as a moderator of angiogenesis in response to injury. In Bos taurus (Bovine), this protein is Matrilin-1.